Reading from the N-terminus, the 816-residue chain is Phosphatidylinositol 4-kinase beta (816 aa).

Disordered stretches follow at residues 1-30 (MGDTVVEPAPLKPTSEPTSGPPGNNGGSLL), 99-120 (EEEDEMGASVASGTAKGARRRR), and 248-318 (AHRK…SFSS). Glycine 2 carries the N-acetylglycine modification. An interaction with ACBD3 region spans residues 2-68 (GDTVVEPAPL…VKLLHGGVAV (67 aa)). The 191-residue stretch at 52 to 242 (CQDVLEKVKL…GTKLRKLILS (191 aa)) folds into the PIK helical domain. The residue at position 258 (serine 258) is a Phosphoserine. The residue at position 263 (threonine 263) is a Phosphothreonine. 5 positions are modified to phosphoserine: serine 266, serine 275, serine 277, serine 284, and serine 294. Composition is skewed to polar residues over residues 278 to 297 (DATASISLSSNLKRTASNPK) and 306 to 318 (SSSTESIDNSFSS). A Phosphoserine modification is found at serine 428. Phosphothreonine is present on threonine 438. A Phosphoserine modification is found at serine 511. Phosphothreonine occurs at positions 517 and 519. Residues 535 to 801 (EPWQEKVRRI…MVDGSMRSIT (267 aa)) form the PI3K/PI4K catalytic domain. The tract at residues 541 to 547 (VRRIREG) is G-loop. A catalytic loop region spans residues 668 to 676 (QVKDRHNGN). The segment at 687–711 (HIDFGFILSSSPRNLGFETSAFKLT) is activation loop.

Belongs to the PI3/PI4-kinase family. Type III PI4K subfamily. As to quaternary structure, interacts with ARF1 and ARF3 in the Golgi complex, but not with ARF4, ARF5 or ARF6. Interacts with NCS1/FREQ in a calcium-independent manner. Interacts with CALN1/CABP8 and CALN2/CABP7; in a calcium-dependent manner; this interaction competes with NCS1/FREQ binding. Interacts with ACBD3. Interacts with ARMH3, YWHAB, YWHAE, YWHAG, YWHAH, YWHAQ, YWHAZ and SFN. Interacts with GGA2 (via VHS domain); the interaction is important for PI4KB location at the Golgi apparatus membrane. Interacts with ATG9A. Mg(2+) is required as a cofactor. It depends on Mn(2+) as a cofactor.

It is found in the endomembrane system. The protein localises to the mitochondrion outer membrane. It localises to the rough endoplasmic reticulum membrane. Its subcellular location is the golgi apparatus. The protein resides in the golgi apparatus membrane. The catalysed reaction is a 1,2-diacyl-sn-glycero-3-phospho-(1D-myo-inositol) + ATP = a 1,2-diacyl-sn-glycero-3-phospho-(1D-myo-inositol 4-phosphate) + ADP + H(+). With respect to regulation, inhibited by wortmannin. Increased kinase activity upon interaction with NCS1/FREQ. In terms of biological role, phosphorylates phosphatidylinositol (PI) in the first committed step in the production of the second messenger inositol-1,4,5,-trisphosphate (PIP). May regulate Golgi disintegration/reorganization during mitosis, possibly via its phosphorylation. Involved in Golgi-to-plasma membrane trafficking. This Callithrix jacchus (White-tufted-ear marmoset) protein is Phosphatidylinositol 4-kinase beta (PI4KB).